The chain runs to 450 residues: UDP-N-acetylmuramoylalanine--D-glutamate ligase (450 aa).

119-125 serves as a coordination point for ATP; it reads GSNGKTT.

It belongs to the MurCDEF family.

Its subcellular location is the cytoplasm. The catalysed reaction is UDP-N-acetyl-alpha-D-muramoyl-L-alanine + D-glutamate + ATP = UDP-N-acetyl-alpha-D-muramoyl-L-alanyl-D-glutamate + ADP + phosphate + H(+). It participates in cell wall biogenesis; peptidoglycan biosynthesis. Functionally, cell wall formation. Catalyzes the addition of glutamate to the nucleotide precursor UDP-N-acetylmuramoyl-L-alanine (UMA). The chain is UDP-N-acetylmuramoylalanine--D-glutamate ligase from Streptococcus pneumoniae (strain Taiwan19F-14).